Here is a 71-residue protein sequence, read N- to C-terminus: General transcription and DNA repair factor IIH subunit TFB5 (71 aa).

The protein belongs to the TFB5 family. Component of the 7-subunit TFIIH core complex composed of XPB, XPD, TFB1/GTF2H1, GTF2H2/P44, TFB4/GTF2H3, TFB2/GTF2H4 and TFB5/GTF2H5, which is active in NER. The core complex associates with the 3-subunit CDK-activating kinase (CAK) module composed of CYCH1/cyclin H1, CDKD and MAT1/At4g30820 to form the 10-subunit holoenzyme (holo-TFIIH) active in transcription.

Its subcellular location is the nucleus. Component of the general transcription and DNA repair factor IIH (TFIIH) core complex, which is involved in general and transcription-coupled nucleotide excision repair (NER) of damaged DNA and, when complexed to CAK, in RNA transcription by RNA polymerase II. In NER, TFIIH acts by opening DNA around the lesion to allow the excision of the damaged oligonucleotide and its replacement by a new DNA fragment. In transcription, TFIIH has an essential role in transcription initiation. When the pre-initiation complex (PIC) has been established, TFIIH is required for promoter opening and promoter escape. Phosphorylation of the C-terminal tail (CTD) of the largest subunit of RNA polymerase II by the kinase module CAK controls the initiation of transcription. The protein is General transcription and DNA repair factor IIH subunit TFB5 of Arabidopsis thaliana (Mouse-ear cress).